Consider the following 707-residue polypeptide: Tryptophan synthase (707 aa).

The interval 1–297 is tryptophan synthase alpha chain; it reads MSEQLRQTFA…VKKEILDEFD (297 aa). Catalysis depends on proton acceptor residues Glu50 and Asp61. The tract at residues 298 to 707 is tryptophan synthase beta chain; sequence ENHKHPIRFG…DLRFEEDPSA (410 aa). Lys384 bears the N6-(pyridoxal phosphate)lysine mark. Phosphoserine occurs at positions 540 and 683.

The protein in the N-terminal section; belongs to the TrpA family. It in the C-terminal section; belongs to the TrpB family. Requires pyridoxal 5'-phosphate as cofactor.

It carries out the reaction (1S,2R)-1-C-(indol-3-yl)glycerol 3-phosphate + L-serine = D-glyceraldehyde 3-phosphate + L-tryptophan + H2O. Its pathway is amino-acid biosynthesis; L-tryptophan biosynthesis; L-tryptophan from chorismate: step 5/5. This chain is Tryptophan synthase (TRP5), found in Saccharomyces cerevisiae (strain ATCC 204508 / S288c) (Baker's yeast).